A 464-amino-acid chain; its full sequence is tRNA-2-methylthio-N(6)-dimethylallyladenosine synthase (464 aa).

The region spanning 4-119 (RTFHIMTFGC…APQAIERLVQ (116 aa)) is the MTTase N-terminal domain. The [4Fe-4S] cluster site is built by C13, C48, C82, C158, C162, and C165. The Radical SAM core domain maps to 144-375 (GEVPVSAYVN…QEVQNEYSEA (232 aa)). The TRAM domain occupies 378-461 (QAMVGKTVMV…KHSLTGEPAG (84 aa)). Residues 393-420 (SPKSAAGSGTDAQNAAEESGRTASSWQG) form a disordered region.

The protein belongs to the methylthiotransferase family. MiaB subfamily. Monomer. Requires [4Fe-4S] cluster as cofactor.

It localises to the cytoplasm. The catalysed reaction is N(6)-dimethylallyladenosine(37) in tRNA + (sulfur carrier)-SH + AH2 + 2 S-adenosyl-L-methionine = 2-methylsulfanyl-N(6)-dimethylallyladenosine(37) in tRNA + (sulfur carrier)-H + 5'-deoxyadenosine + L-methionine + A + S-adenosyl-L-homocysteine + 2 H(+). Functionally, catalyzes the methylthiolation of N6-(dimethylallyl)adenosine (i(6)A), leading to the formation of 2-methylthio-N6-(dimethylallyl)adenosine (ms(2)i(6)A) at position 37 in tRNAs that read codons beginning with uridine. The sequence is that of tRNA-2-methylthio-N(6)-dimethylallyladenosine synthase from Oleidesulfovibrio alaskensis (strain ATCC BAA-1058 / DSM 17464 / G20) (Desulfovibrio alaskensis).